We begin with the raw amino-acid sequence, 938 residues long: MSDYKNTLNLPETGFPMRGDLAKREPDMLKRWYEQDLYGIIRAAKKGKKTFILHDGPPYANGNIHIGHSVNKILKDIIVKSKGMAGYDSPYIPGWDCHGLPIELKVEQLIGKPGEKVSAAEFRTACRKYAAEQVEGQKKDFIRLGVLGDWDHPYLTMDFKTEANIIRALSKIIDNGHLHKGAKPVHWCTDCGSSLAEAEVEYYDKTSQSIDVRFNAVDTATVAAKFGVSAVNGPISLVIWTTTPWTLPANRAISLNAEYLYQLVQVEGECLILAADLVESVMKRAGITQWAVLGSCTGSDLELLRFTHPFMGFDVPAILGDHVTLDAGTGAVHTAPGHGPDDFVIGQKYGLEVANPVGPNGCYLAGTYPTLDGLFVFKANDVVVELLREKGALLHVEKLLHSYPCCWRHKTPIIFRATPQWFISMDQKGLRKQSLQEIKGVQWIPDWGQARIETMVANRPDWCISRQRTWGVPMSLFVHKETEQLHPRSIELMEEVAKRVEQDGIQAWWDLDPAEILGADAADYVKVPDTLDVWFDSGSTHSSVVDVRPEFGGHSPDMYLEGSDQHRGWFMSSLMIATAMKGKAPYRQVLTHGFTVDGQGRKMSKSIGNTISPQDVMNKLGGDILRLWVASTDYTGEIAVSDEILKRSADSYRRIRNTARFLLANLNGFDPAQHQVKPEEMVVVDRWAVGRAQAAQAEIMEAYENYDFHLVVQRLMQFCSVEMGSFYLDIIKDRQYTAKGDGIARRSCQTALFHIAEALVRWMAPIMSFTADEIWNHLPGERQQYVFTEEWYDGLFGLAGNESMNDTFWAELLKVRGEVNKVLEQARSDKRIGGSLEAAVTLYAEPELAARLNSLQDELRFVLLTSAAKVAAYADAGNDAQQSELIAGLKITFNKADGEKCPRCWHYTQDVGLVAEHAELCGRCVTNVAGDGEERKFA.

The 'HIGH' region motif lies at 58 to 68; sequence PYANGNIHIGH. Glu561 is a binding site for L-isoleucyl-5'-AMP. Positions 602 to 606 match the 'KMSKS' region motif; it reads KMSKS. Lys605 contributes to the ATP binding site. Positions 901, 904, 921, and 924 each coordinate Zn(2+).

The protein belongs to the class-I aminoacyl-tRNA synthetase family. IleS type 1 subfamily. In terms of assembly, monomer. It depends on Zn(2+) as a cofactor.

Its subcellular location is the cytoplasm. The catalysed reaction is tRNA(Ile) + L-isoleucine + ATP = L-isoleucyl-tRNA(Ile) + AMP + diphosphate. Catalyzes the attachment of isoleucine to tRNA(Ile). As IleRS can inadvertently accommodate and process structurally similar amino acids such as valine, to avoid such errors it has two additional distinct tRNA(Ile)-dependent editing activities. One activity is designated as 'pretransfer' editing and involves the hydrolysis of activated Val-AMP. The other activity is designated 'posttransfer' editing and involves deacylation of mischarged Val-tRNA(Ile). The protein is Isoleucine--tRNA ligase of Yersinia pestis bv. Antiqua (strain Angola).